A 422-amino-acid polypeptide reads, in one-letter code: MPRSFLVKSKKAHSYHQPRSPGPDYSLRLENVPAPSRADSTSNAGGAKAEPRDRLSPESQLTEAPDRASASPDSCEGSVCERSSEFEDFWRPPSPSASPASEKSMCPSLDEAQPFPLPFKPYSWSGLAGSDLRHLVQSYRPCGALERGAGLGLFCEPAPEPGHPAALYGPKRAAGGAGAGAPGSCSAGAGATAGPGLGLYGDFGSAAAGLYERPTAAAGLLYPERGHGLHADKGAGVKVESELLCTRLLLGGGSYKCIKCSKVFSTPHGLEVHVRRSHSGTRPFACEMCGKTFGHAVSLEQHKAVHSQERSFDCKICGKSFKRSSTLSTHLLIHSDTRPYPCQYCGKRFHQKSDMKKHTFIHTGEKPHKCQVCGKAFSQSSNLITHSRKHTGFKPFGCDLCGKGFQRKVDLRRHRETQHGLK.

The tract at residues Met1–Ser20 is SNAG domain. The tract at residues Met1 to Leu109 is disordered. A phosphoserine mark is found at Ser20 and Ser56. The interval Arg140–Cys257 is required for interaction with RELA. C2H2-type zinc fingers lie at residues Tyr255–His278, Phe284–His306, Phe312–His334, Tyr340–His362, His368–His390, and Phe396–His419.

Interacts with U2AF1L4. Component of RCOR-GFI-KDM1A-HDAC complexes. Interacts directly with RCOR1, KDM1A and HDAC2. Also interacts with HDAC1. Interacts (via the zinc-finger domain) with ARIH2; the interaction prevents GFI1 ubiquitination and proteasomal degradation. Interacts with PIAS3; the interaction relieves the inhibitory effect of PIAS3 on STAT3-mediated transcriptional activity. Forms a complex with EHMT2 and HDAC1 to promote 'Lys-9' dimethylation of H3 (H3K9Me2) and repress expression of target genes. Interacts directly with EHMT2. Component of the GFI1-AJUBA-HDAC1 repressor complex. Interacts directly with AJUBA (via ITS LIM domains); the interaction results in the HDAC-dependent corepression of a subset of GFI1 target genes and, occurs independently of the SNAG domain. Interacts with SPI1; the interaction inhibits SPI1 transcriptional activity targeted at macrophage-specific genes, repressing macrophage differentiation of myeloid progenitor cells and promoting granulocyte commitment. Interacts with RUNX1T1; the interaction represses HDAC-mediated transcriptional activity. Interacts with RELA; the interaction occurs on liposaccharide (LPS) stimulation and controls RELA DNA binding activity and regulates endotoxin-mediated TOLL-like receptor inflammatory response. Interacts (via the C-terminal zinc fingers) with ZBTB17; the interaction results in the recruitment of GFI1 to the CDKN1A/p21 and CDKN1B promoters and repression of transcription. In terms of processing, ubiquitinated. Ubiquitination and degradation by the proteasome is inhibited by the ubiquitin ligase, ARIH2.

It localises to the nucleus. Its function is as follows. Transcription repressor essential for hematopoiesis. Functions in a cell-context and development-specific manner. Binds to 5'-TAAATCAC[AT]GCA-3' in the promoter region of a large number of genes. Component of several complexes, including the EHMT2-GFI1-HDAC1, AJUBA-GFI1-HDAC1 and RCOR-GFI-KDM1A-HDAC complexes, that suppress, via histone deacetylase (HDAC) recruitment, a number of genes implicated in multilineage blood cell development. Regulates neutrophil differentiation, promotes proliferation of lymphoid cells, and is required for granulocyte development. Inhibits SPI1 transcriptional activity at macrophage-specific genes, repressing macrophage differentiation of myeloid progenitor cells and promoting granulocyte commitment. Mediates, together with U2AF1L4, the alternative splicing of CD45 and controls T-cell receptor signaling. Regulates the endotoxin-mediated Toll-like receptor (TLR) inflammatory response by antagonizing RELA. Cooperates with CBFA2T2 to regulate ITGB1-dependent neurite growth. Controls cell-cycle progression by repressing CDKNIA/p21 transcription in response to TGFB1 via recruitment of GFI1 by ZBTB17 to the CDKNIA/p21 and CDKNIB promoters. Required for the maintenance of inner ear hair cells. In addition to its role in transcription, acts as a substrate adapter for PRMT1 in the DNA damage response: facilitates the recognition of TP53BP1 and MRE11 substrates by PRMT1, promoting their methylation and the DNA damage response. This chain is Zinc finger protein Gfi-1 (GFI1), found in Homo sapiens (Human).